The following is a 275-amino-acid chain: Probable CCR4-associated factor 1 homolog 7 (275 aa).

4 residues coordinate a divalent metal cation: D40, E42, D167, and D236.

This sequence belongs to the CAF1 family. In terms of assembly, component of the CCR4-NOT complex, at least composed of CRR4 and CAF1 proteins. A divalent metal cation serves as cofactor.

Its subcellular location is the nucleus. It is found in the cytoplasm. It catalyses the reaction Exonucleolytic cleavage of poly(A) to 5'-AMP.. Ubiquitous transcription factor required for a diverse set of processes. It is a component of the CCR4 complex involved in the control of gene expression. The polypeptide is Probable CCR4-associated factor 1 homolog 7 (CAF1-7) (Arabidopsis thaliana (Mouse-ear cress)).